The following is a 214-amino-acid chain: Nodulation protein A (214 aa).

The protein belongs to the NodA family.

Its subcellular location is the cytoplasm. In terms of biological role, N-acyltransferase required for nodulation. Acts in the production of a small, heat-stable compound (Nod) that stimulates mitosis in various plant protoplasts. The protein is Nodulation protein A of Methylobacterium nodulans (strain LMG 21967 / CNCM I-2342 / ORS 2060).